The primary structure comprises 407 residues: Arginine deiminase (407 aa).

C397 acts as the Amidino-cysteine intermediate in catalysis.

It belongs to the arginine deiminase family.

The protein localises to the cytoplasm. The catalysed reaction is L-arginine + H2O = L-citrulline + NH4(+). The protein operates within amino-acid degradation; L-arginine degradation via ADI pathway; carbamoyl phosphate from L-arginine: step 1/2. In Listeria welshimeri serovar 6b (strain ATCC 35897 / DSM 20650 / CCUG 15529 / CIP 8149 / NCTC 11857 / SLCC 5334 / V8), this protein is Arginine deiminase.